The chain runs to 309 residues: DDRGK domain-containing protein 1 (309 aa).

Residues 1–2 (MD) lie on the Lumenal side of the membrane. A helical transmembrane segment spans residues 3–23 (LIILVGIASALLVVILTIFFL). The Cytoplasmic segment spans residues 24–309 (QKKKGGTEAK…VSAGAGEGSS (286 aa)). The disordered stretch occupies residues 30-178 (TEAKEAAAPP…RLVKEERERK (149 aa)). Positions 53-84 (RRAQIARNQRNRLRQNAPAAAPAAAAALQAAD) are enriched in low complexity. A compositionally biased stretch (acidic residues) spans 85–95 (AEGDNDDENPD). Basic and acidic residues predominate over residues 107 to 178 (LDEKMGAKKR…RLVKEERERK (72 aa)).

It belongs to the DDRGK1 family. In terms of assembly, interacts with Atg9; the interaction is transient.

The protein localises to the endoplasmic reticulum membrane. Substrate adapter for ufmylation, the covalent attachment of the ubiquitin-like modifier UFM1 to substrate proteins. Required for ufmylation of Atg9; protects the nervous system during aging, possibly by stabilizing Atg9 and supporting its function. This is DDRGK domain-containing protein 1 from Drosophila persimilis (Fruit fly).